The following is a 215-amino-acid chain: Probable nicotinate-nucleotide adenylyltransferase (215 aa).

This sequence belongs to the NadD family.

It carries out the reaction nicotinate beta-D-ribonucleotide + ATP + H(+) = deamido-NAD(+) + diphosphate. Its pathway is cofactor biosynthesis; NAD(+) biosynthesis; deamido-NAD(+) from nicotinate D-ribonucleotide: step 1/1. Catalyzes the reversible adenylation of nicotinate mononucleotide (NaMN) to nicotinic acid adenine dinucleotide (NaAD). The polypeptide is Probable nicotinate-nucleotide adenylyltransferase (Gluconacetobacter diazotrophicus (strain ATCC 49037 / DSM 5601 / CCUG 37298 / CIP 103539 / LMG 7603 / PAl5)).